We begin with the raw amino-acid sequence, 357 residues long: COP9 signalosome complex subunit 5a (357 aa).

N-acetylmethionine is present on methionine 1. One can recognise an MPN domain in the interval 59 to 196; it reads VHISALALLK…IGAFRTYPEG (138 aa). Positions 142, 144, and 155 each coordinate Zn(2+). The JAMM motif motif lies at 142 to 155; it reads HSHPGYGCWLSGID. The disordered stretch occupies residues 338–357; that stretch reads ARQSKKSADDSSDPEPMITS.

This sequence belongs to the peptidase M67A family. CSN5 subfamily. In terms of assembly, component of the CSN complex, probably composed of CSN1, CSN2, CSN3, CSN4, CSN5 (CSN5A or CSN5B), CSN6 (CSN6A or CSN6B), CSN7 and CSN8. CSN5A or CSN5B are present within distinct CSN complexes each containing only one copy of CSN5. Interacts with itself. In the complex, it is located in the center and probably interacts directly with CSN4 and CSN6A or CSN6B. Present also in subcomplex forms which inculdes CSN3. Also exists as monomeric form. Interacts with CYT1 in vitro, but not in planta. A divalent metal cation serves as cofactor. In terms of tissue distribution, ubiquitously expressed. Highly expressed in flowers and roots. Expressed at lower level in seedlings and siliques.

It is found in the cytoplasm. The protein resides in the nucleus. Its function is as follows. Probable protease subunit of the COP9 signalosome complex (CSN), a complex involved in various cellular and developmental processes such as photomorphogenesis and auxin and jasmonate responses. The CSN complex is an essential regulator of the ubiquitin (Ubl) conjugation pathway by mediating the deneddylation of the cullin subunits of the SCF-type E3 ligase complexes, leading to decrease the Ubl ligase activity of SCF. In the complex, it probably acts as the catalytic center that mediates the cleavage of Nedd8 from cullins. It however has no metalloprotease activity by itself and requires the other subunits of the CSN complex. The CSN complex is involved in repression of photomorphogenesis in darkness by regulating the activity of COP1-containing Ubl ligase complexes. The complex is also required for degradation of PSIAA6 by regulating the activity of the Ubl ligase SCF-TIR complex. Involved in CSN's deneddylation/derubylation activity. Required for the deneddylation of all cullins. Essential for the structural integrity of the CSN holocomplex. This chain is COP9 signalosome complex subunit 5a, found in Arabidopsis thaliana (Mouse-ear cress).